The sequence spans 532 residues: Membrane protein insertase YidC (532 aa).

6 consecutive transmembrane segments (helical) span residues 6–26, 317–337, 342–362, 411–431, 451–473, and 496–516; these read IVLA…FAEY, AIDF…LTFF, GNWG…FWPL, GGCL…QALL, VWLA…GASM, and PIIF…YWLF.

Belongs to the OXA1/ALB3/YidC family. Type 1 subfamily. As to quaternary structure, interacts with the Sec translocase complex via SecD. Specifically interacts with transmembrane segments of nascent integral membrane proteins during membrane integration.

It localises to the cell membrane. In terms of biological role, required for the insertion and/or proper folding and/or complex formation of integral membrane proteins into the membrane. Involved in integration of membrane proteins that insert both dependently and independently of the Sec translocase complex, as well as at least some lipoproteins. Aids folding of multispanning membrane proteins. This Lawsonia intracellularis (strain PHE/MN1-00) protein is Membrane protein insertase YidC.